A 484-amino-acid chain; its full sequence is ATP-dependent rRNA helicase RRP3 (484 aa).

2 stretches are compositionally biased toward low complexity: residues 1–14 (MPSP…SMSQ) and 22–34 (PSPA…APEA). The interval 1 to 38 (MPSPSPEASSSMSQPGPPSRSPSPASSNPDAPEASHNK) is disordered. Positions 38 to 66 (KTFADLGISPELCRACASMGFKKPSDIQA) match the Q motif motif. Residues 69–240 (IPHALEGKDI…RASLNKPVRV (172 aa)) form the Helicase ATP-binding domain. 82–89 (AQTGSGKT) lines the ATP pocket. The short motif at 188–191 (DEAD) is the DEAD box element. The Helicase C-terminal domain occupies 263-411 (NKDAYLLYLA…SFDVDKEAVA (149 aa)). The interval 425 to 484 (ALEMRESGTGGGGGKRGRDKGKRKTFGDGDDRDRDDDVVEAGVPRKKNKFTPGGKKKARK) is disordered. Basic residues-rich tracts occupy residues 439–448 (KRGRDKGKRK) and 468–484 (PRKK…KARK).

Belongs to the DEAD box helicase family. DDX47/RRP3 subfamily. Interacts with the SSU processome.

Its subcellular location is the nucleus. It carries out the reaction ATP + H2O = ADP + phosphate + H(+). ATP-dependent rRNA helicase required for pre-ribosomal RNA processing. Involved in the maturation of the 35S-pre-rRNA and to its cleavage to mature 18S rRNA. This chain is ATP-dependent rRNA helicase RRP3, found in Cryptococcus neoformans var. neoformans serotype D (strain B-3501A) (Filobasidiella neoformans).